The chain runs to 488 residues: Glutamyl-tRNA(Gln) amidotransferase subunit A (488 aa).

Catalysis depends on charge relay system residues Lys-77 and Ser-152. The Acyl-ester intermediate role is filled by Ser-176.

Belongs to the amidase family. GatA subfamily. Heterotrimer of A, B and C subunits.

The catalysed reaction is L-glutamyl-tRNA(Gln) + L-glutamine + ATP + H2O = L-glutaminyl-tRNA(Gln) + L-glutamate + ADP + phosphate + H(+). In terms of biological role, allows the formation of correctly charged Gln-tRNA(Gln) through the transamidation of misacylated Glu-tRNA(Gln) in organisms which lack glutaminyl-tRNA synthetase. The reaction takes place in the presence of glutamine and ATP through an activated gamma-phospho-Glu-tRNA(Gln). This is Glutamyl-tRNA(Gln) amidotransferase subunit A from Streptococcus pneumoniae (strain ATCC 700669 / Spain 23F-1).